Consider the following 530-residue polypeptide: Calnexin homolog 1 (530 aa).

The first 20 residues, 1 to 20, serve as a signal peptide directing secretion; the sequence is MRQRQLFSVFLLLLAFVSFQ. Residues 21–466 are Lumenal-facing; that stretch reads KLCYCDDQTV…EKAEQQPNLT (446 aa). Residues Ser34 and Asp65 each coordinate Ca(2+). Cys108 and Cys143 are oxidised to a cystine. An alpha-D-glucoside is bound by residues Tyr112, Lys114, Tyr134, and Asp141. Positions 216 to 315 are disordered; sequence ALIPAKTIPD…KCEAAPGCGE (100 aa). The segment at 223–356 is p domain (Extended arm); the sequence is IPDPEDKKPE…RDIPNPDYFE (134 aa). The span at 224 to 240 shows a compositional bias: basic and acidic residues; that stretch reads PDPEDKKPEDWDERAKI. 5 consecutive repeat copies span residues 225–236, 242–253, 261–272, 280–291, and 295–305. 2 4 X approximate repeats regions span residues 225 to 291 and 295 to 352; these read DPED…DWDD and GMWE…IPNP. Over residues 250-281 the composition is skewed to acidic residues; it reads DWDEDAPMEIEDEEAEKPEGWLDDEPEEVDDP. The cysteines at positions 307 and 313 are disulfide-linked. Tandem repeats lie at residues 314-324, 328-338, and 342-352. Glu371 is an an alpha-D-glucoside binding site. Residue Asp382 coordinates Ca(2+). A glycan (N-linked (GlcNAc...) asparagine) is linked at Asn464. Residues 467–487 traverse the membrane as a helical segment; it reads IGVLVAIVVVFFSLFLKLIFG. Residues 488-530 are Cytoplasmic-facing; it reads GKKAAAPVEKKKPEVAESSKSGDEAEKKEETAAPRKRQPRRDN. The tract at residues 490-530 is disordered; sequence KAAAPVEKKKPEVAESSKSGDEAEKKEETAAPRKRQPRRDN. Positions 495 to 520 are enriched in basic and acidic residues; that stretch reads VEKKKPEVAESSKSGDEAEKKEETAA. Residue Ser508 is modified to Phosphoserine. Residues 521–530 show a composition bias toward basic residues; the sequence is PRKRQPRRDN.

It belongs to the calreticulin family.

The protein localises to the endoplasmic reticulum membrane. In terms of biological role, calcium-binding protein that interacts with newly synthesized monoglucosylated glycoproteins in the endoplasmic reticulum. It may act in assisting protein assembly and/or in the retention within the ER of unassembled protein subunits. It seems to play a major role in the quality control apparatus of the ER by the retention of incorrectly folded proteins. This Arabidopsis thaliana (Mouse-ear cress) protein is Calnexin homolog 1 (CNX1).